The following is a 456-amino-acid chain: MFS-type transporter ppzB (456 aa).

5 helical membrane-spanning segments follow: residues 1–21 (MGLF…PFIM), 38–58 (GFLA…GWAA), 72–92 (VFLF…LLVV), 125–145 (IGTI…LGGV), and 154–174 (AVFA…GLVI). A disordered region spans residues 206–225 (EAQERTHEGTPLLPQDDDDD). Transmembrane regions (helical) follow at residues 255-275 (LAML…ATVP), 284-304 (FSSL…FALG), 318-338 (AAAT…GLPE), 348-368 (VALF…VTSP), 398-418 (FGFS…LGGV), and 427-447 (VMGA…FLFV).

The protein belongs to the major facilitator superfamily. TCR/Tet family.

Its subcellular location is the membrane. Functionally, MFS-type transporter; part of the gene cluster that mediates the biosynthesis of pyrrolopyrazines, secondary metabolites showing insecticidal activity. Probably involved in the secretion of peramine and other pyrrolopyrazines. The polypeptide is MFS-type transporter ppzB (ppzB) (Metarhizium majus (strain ARSEF 297)).